The chain runs to 1284 residues: ABC multidrug transporter atrC (1284 aa).

Basic and acidic residues predominate over residues 1-11; that stretch reads MKSTAESKETP. Positions 1 to 24 are disordered; the sequence is MKSTAESKETPSQDESTTSVPCTE. 6 consecutive transmembrane segments (helical) span residues 55 to 75, 99 to 119, 178 to 198, 203 to 223, 282 to 302, and 320 to 340; these read AVAILAACASGAGIALQNLIF, AAELALYFVYLGIARLVLSYT, IGLLFQGLAAFVTAFIIAFVV, TLICICIPVATIGTTGVVAAV, LLGLLFSAEYTIIYLGYGLAF, and IFTVLLSVVIASINLTLLAPY. Positions 55–346 constitute an ABC transmembrane type-1 1 domain; that stretch reads AVAILAACAS…LAPYSIEFSR (292 aa). Residues 381–626 form the ABC transporter 1 domain; the sequence is VELENVTFSY…DGVYAGLVKI (246 aa). N385 and N401 each carry an N-linked (GlcNAc...) asparagine glycan. 416-423 lines the ATP pocket; the sequence is GQSGSGKS. N-linked (GlcNAc...) asparagine glycans are attached at residues N488 and N632. 2 consecutive transmembrane segments (helical) span residues 705 to 725 and 745 to 765; these read LVVLLGCLGGCAMYPGQAILM and FYASMLIVLAAGCLICYLAVG. In terms of domain architecture, ABC transmembrane type-1 2 spans 705–992; sequence LVVLLGCLGG…LFQWSTSITK (288 aa). Residue N800 is glycosylated (N-linked (GlcNAc...) asparagine). 4 helical membrane-spanning segments follow: residues 824 to 844, 846 to 866, 931 to 951, and 955 to 975; these read IALVVIAVLQVVTCGILAIAF, WKLGLVVVFGGIPPLVGAGMV, MICFGLTQCIEYWFQALGFWY, and LVSLGETSMYSFFVAFLSVFF. N-linked (GlcNAc...) asparagine glycosylation is present at N995. The ABC transporter 2 domain occupies 1027–1280; it reads IAMDNVRFSY…GGLYRRMCEA (254 aa). 1062–1069 contacts ATP; sequence GSSGCGKS. N-linked (GlcNAc...) asparagine glycosylation occurs at N1122.

Belongs to the ABC transporter superfamily. ABCB family. Multidrug resistance exporter (TC 3.A.1.201) subfamily.

The protein localises to the cell membrane. In terms of biological role, pleiotropic ABC efflux transporter involved in the protection of the cells against a wide range of toxic compounds. The chain is ABC multidrug transporter atrC from Emericella nidulans (strain FGSC A4 / ATCC 38163 / CBS 112.46 / NRRL 194 / M139) (Aspergillus nidulans).